Here is a 59-residue protein sequence, read N- to C-terminus: Conotoxin Ts-03 (59 aa).

A signal peptide spans 1–19 (MRCLPVFIILLLLIPSAAS). Positions 20 to 47 (VAQPKTKDDVALASFYDNAKRTLQRHWA) are excised as a propeptide.

The protein belongs to the conotoxin T superfamily. Contains 2 disulfide bonds that can be either 'C1-C3, C2-C4' or 'C1-C4, C2-C3', since these disulfide connectivities have been observed for conotoxins with cysteine framework V (for examples, see AC P0DQQ7 and AC P81755). Expressed by the venom duct.

Its subcellular location is the secreted. The chain is Conotoxin Ts-03 from Conus tessulatus (Tessellate cone).